Here is a 249-residue protein sequence, read N- to C-terminus: DNA polymerase sliding clamp 3 (249 aa).

It belongs to the PCNA family. In terms of assembly, homotrimer. The subunits circularize to form a toroid; DNA passes through its center. Replication factor C (RFC) is required to load the toroid on the DNA.

In terms of biological role, sliding clamp subunit that acts as a moving platform for DNA processing. Responsible for tethering the catalytic subunit of DNA polymerase and other proteins to DNA during high-speed replication. This is DNA polymerase sliding clamp 3 from Aeropyrum pernix (strain ATCC 700893 / DSM 11879 / JCM 9820 / NBRC 100138 / K1).